Reading from the N-terminus, the 341-residue chain is Ketol-acid reductoisomerase (NADP(+)) (341 aa).

The region spanning 2–182 (TDIVYDKDAD…GGLRAGGIRT (181 aa)) is the KARI N-terminal Rossmann domain. NADP(+) is bound by residues 25 to 28 (YGSQ), lysine 48, serine 51, serine 53, and 83 to 86 (DQHQ). Histidine 108 is an active-site residue. Glycine 134 lines the NADP(+) pocket. The region spanning 183–328 (TFTEETETDL…RELRKLFAWN (146 aa)) is the KARI C-terminal knotted domain. Mg(2+) contacts are provided by aspartate 191, glutamate 195, glutamate 227, and glutamate 231. A substrate-binding site is contributed by serine 252.

This sequence belongs to the ketol-acid reductoisomerase family. The cofactor is Mg(2+).

The catalysed reaction is (2R)-2,3-dihydroxy-3-methylbutanoate + NADP(+) = (2S)-2-acetolactate + NADPH + H(+). It catalyses the reaction (2R,3R)-2,3-dihydroxy-3-methylpentanoate + NADP(+) = (S)-2-ethyl-2-hydroxy-3-oxobutanoate + NADPH + H(+). It participates in amino-acid biosynthesis; L-isoleucine biosynthesis; L-isoleucine from 2-oxobutanoate: step 2/4. The protein operates within amino-acid biosynthesis; L-valine biosynthesis; L-valine from pyruvate: step 2/4. In terms of biological role, involved in the biosynthesis of branched-chain amino acids (BCAA). Catalyzes an alkyl-migration followed by a ketol-acid reduction of (S)-2-acetolactate (S2AL) to yield (R)-2,3-dihydroxy-isovalerate. In the isomerase reaction, S2AL is rearranged via a Mg-dependent methyl migration to produce 3-hydroxy-3-methyl-2-ketobutyrate (HMKB). In the reductase reaction, this 2-ketoacid undergoes a metal-dependent reduction by NADPH to yield (R)-2,3-dihydroxy-isovalerate. The polypeptide is Ketol-acid reductoisomerase (NADP(+)) (Clavibacter michiganensis subsp. michiganensis (strain NCPPB 382)).